A 431-amino-acid polypeptide reads, in one-letter code: Salivary plasminogen activator beta (431 aa).

Positions 1–36 (MVNTMKTKLLCVLLLCGAVFSLPRQETYRQLARGSR) are cleaved as a signal peptide. The EGF-like domain occupies 37–75 (AYGGCSELRCFNGGTCWQAASFSDFVCQCPKGYTGKQCE). 12 disulfide bridges follow: Cys-41-Cys-52, Cys-46-Cys-63, Cys-65-Cys-74, Cys-82-Cys-163, Cys-103-Cys-145, Cys-134-Cys-158, Cys-168-Cys-299, Cys-211-Cys-227, Cys-219-Cys-288, Cys-313-Cys-388, Cys-345-Cys-361, and Cys-378-Cys-406. The region spanning 82–163 (CYKDQGVTYR…ILEFCSVPVC (82 aa)) is the Kringle domain. N-linked (GlcNAc...) asparagine glycosylation is present at Asn-139. The region spanning 180–430 (STGGLFTDIT…YLGWIRDNMR (251 aa)) is the Peptidase S1 domain. Active-site charge relay system residues include His-226 and Asp-275. Residue Asn-352 is glycosylated (N-linked (GlcNAc...) asparagine). Residue Ser-382 is the Charge relay system of the active site.

It belongs to the peptidase S1 family. Monomer.

The protein localises to the secreted. It carries out the reaction Specific cleavage of Arg-|-Val bond in plasminogen to form plasmin.. Its function is as follows. Probably essential to support the feeding habits of this exclusively haematophagous animal. Probable potent thrombolytic agent. The sequence is that of Salivary plasminogen activator beta from Desmodus rotundus (Vampire bat).